A 348-amino-acid chain; its full sequence is Inosamine-phosphate amidinotransferase 1 (348 aa).

Residues aspartate 179 and histidine 227 contribute to the active site. Cysteine 332 (amidino-cysteine intermediate) is an active-site residue.

This sequence belongs to the amidinotransferase family. In terms of assembly, homodimer.

The catalysed reaction is 1-amino-1-deoxy-scyllo-inositol 4-phosphate + L-arginine = 1-guanidino-1-deoxy-scyllo-inositol 4-phosphate + L-ornithine. The protein operates within antibiotic biosynthesis; streptomycin biosynthesis. Functionally, catalyzes two non-consecutive transamidination reactions. It converts scyllo-inosamine 4-phosphate into N-amidino-scyllo-inosamine 4-phosphate and N1-amidinostreptamine 6-phosphate into streptidine 6-phosphate. The protein is Inosamine-phosphate amidinotransferase 1 (strB1) of Streptomyces glaucescens.